The chain runs to 328 residues: Biotin synthase (328 aa).

Residues 53–282 (FHGNRVDLCA…ATTIRYAGGR (230 aa)) form the Radical SAM core domain. Residues Cys71, Cys75, and Cys78 each coordinate [4Fe-4S] cluster. Positions 115, 147, 207, and 277 each coordinate [2Fe-2S] cluster.

The protein belongs to the radical SAM superfamily. Biotin synthase family. In terms of assembly, homodimer. [4Fe-4S] cluster serves as cofactor. Requires [2Fe-2S] cluster as cofactor.

It carries out the reaction (4R,5S)-dethiobiotin + (sulfur carrier)-SH + 2 reduced [2Fe-2S]-[ferredoxin] + 2 S-adenosyl-L-methionine = (sulfur carrier)-H + biotin + 2 5'-deoxyadenosine + 2 L-methionine + 2 oxidized [2Fe-2S]-[ferredoxin]. It functions in the pathway cofactor biosynthesis; biotin biosynthesis; biotin from 7,8-diaminononanoate: step 2/2. Functionally, catalyzes the conversion of dethiobiotin (DTB) to biotin by the insertion of a sulfur atom into dethiobiotin via a radical-based mechanism. The sequence is that of Biotin synthase from Desulforudis audaxviator (strain MP104C).